Here is a 217-residue protein sequence, read N- to C-terminus: Oxygen regulatory protein NreC (217 aa).

In terms of domain architecture, Response regulatory spans 2 to 119 (KIVIADDHAV…QLLLAIRTVY (118 aa)). The residue at position 53 (Asp-53) is a 4-aspartylphosphate. An HTH luxR-type domain is found at 148–213 (TTDPFKILSK…ELVEYALKKK (66 aa)). Residues 172 to 191 (NKEIAEKLFVSVKTVEAHKT) constitute a DNA-binding region (H-T-H motif).

Post-translationally, phosphorylated by NreB.

The protein resides in the cytoplasm. Functionally, member of the two-component regulatory system NreB/NreC involved in the control of dissimilatory nitrate/nitrite reduction in response to oxygen. Phosphorylated NreC binds to a GC-rich palindromic sequence at the promoters of the nitrate (narGHJI) and nitrite (nir) reductase operons, as well as the putative nitrate transporter gene narT, and activates their expression. This chain is Oxygen regulatory protein NreC (nreC), found in Staphylococcus aureus (strain USA300 / TCH1516).